Here is a 383-residue protein sequence, read N- to C-terminus: Chaperone protein DnaJ (383 aa).

Residues 6 to 70 (DYYDVLGVGR…QKRAAYDQYG (65 aa)) form the J domain. Residues 140–222 (GKETKISYSR…CHGTGREEER (83 aa)) form a CR-type zinc finger. Residues Cys153, Cys156, Cys170, Cys173, Cys196, Cys199, Cys210, and Cys213 each contribute to the Zn(2+) site. 4 CXXCXGXG motif repeats span residues 153–160 (CHTCHGSG), 170–177 (CHKCHGAG), 196–203 (CDVCGGTG), and 210–217 (CDTCHGTG).

Belongs to the DnaJ family. Homodimer. Zn(2+) is required as a cofactor.

It localises to the cytoplasm. Its function is as follows. Participates actively in the response to hyperosmotic and heat shock by preventing the aggregation of stress-denatured proteins and by disaggregating proteins, also in an autonomous, DnaK-independent fashion. Unfolded proteins bind initially to DnaJ; upon interaction with the DnaJ-bound protein, DnaK hydrolyzes its bound ATP, resulting in the formation of a stable complex. GrpE releases ADP from DnaK; ATP binding to DnaK triggers the release of the substrate protein, thus completing the reaction cycle. Several rounds of ATP-dependent interactions between DnaJ, DnaK and GrpE are required for fully efficient folding. Also involved, together with DnaK and GrpE, in the DNA replication of plasmids through activation of initiation proteins. The polypeptide is Chaperone protein DnaJ (Latilactobacillus sakei subsp. sakei (strain 23K) (Lactobacillus sakei subsp. sakei)).